A 259-amino-acid chain; its full sequence is Chloroplastic group IIB intron splicing facilitator CRS2, chloroplastic (259 aa).

The tract at residues 1 to 21 (MSLAVATPASARLSPLTTSSP) is disordered. The N-terminal 49 residues, 1–49 (MSLAVATPASARLSPLTTSSPEPCRRRRLLLSAAAPLRRTRLRRRIAVV), are a transit peptide targeting the chloroplast. Position 77 (tyrosine 77) interacts with tRNA. The Proton acceptor role is filled by histidine 82. 3 residues coordinate tRNA: tyrosine 127, asparagine 129, and asparagine 175.

Belongs to the PTH family. CRS2 subfamily. In terms of assembly, part of large ribonucleo-protein complexes that include group IIB introns and either CAF1 or CAF2.

The protein localises to the plastid. It localises to the chloroplast stroma. Functionally, required for the splicing of group IIB introns in chloroplasts. This is Chloroplastic group IIB intron splicing facilitator CRS2, chloroplastic from Oryza sativa subsp. japonica (Rice).